The following is a 373-amino-acid chain: Alanine racemase (373 aa).

Catalysis depends on lysine 37, which acts as the Proton acceptor; specific for D-alanine. Lysine 37 carries the post-translational modification N6-(pyridoxal phosphate)lysine. Position 135 (arginine 135) interacts with substrate. The active-site Proton acceptor; specific for L-alanine is the tyrosine 266. A substrate-binding site is contributed by methionine 313.

The protein belongs to the alanine racemase family. It depends on pyridoxal 5'-phosphate as a cofactor.

It catalyses the reaction L-alanine = D-alanine. It participates in amino-acid biosynthesis; D-alanine biosynthesis; D-alanine from L-alanine: step 1/1. Catalyzes the interconversion of L-alanine and D-alanine. This organism is able to use both L- and D-alanine as a nitrogen source. May also prevent D-alanine from interfering with the use of L-alanine. This is Alanine racemase (alr) from Methanococcus maripaludis (strain DSM 14266 / JCM 13030 / NBRC 101832 / S2 / LL).